The chain runs to 284 residues: Probable palmitoyltransferase ZDHHC24 (284 aa).

The Cytoplasmic portion of the chain corresponds to 1-18 (MGEPWAARGTEGAPARMP). The helical transmembrane segment at 19-39 (VVFTALWAAVVVLELTYVMVL) threads the bilayer. At 40 to 52 (GPGPPPLEPLARA) the chain is on the extracellular side. Residues 53 to 73 (LQLALAAYQLLNLLGNMGLFL) traverse the membrane as a helical segment. Over 74–137 (RSDPSIRGVM…GRCVGFHNYR (64 aa)) the chain is Cytoplasmic. Positions 94–144 (AYCYQCQSQVPPRSGHCSACRVCILRRDHHCRLLGRCVGFHNYRPFLCLLL) constitute a DHHC domain. The active-site S-palmitoyl cysteine intermediate is the cysteine 124. A helical membrane pass occupies residues 138–158 (PFLCLLLHAAGVLLHISVLLS). At 159–166 (PALSALLQ) the chain is on the extracellular side. The helical transmembrane segment at 167–187 (AHSALYTVALLLLPWLMLLTG) threads the bilayer. The Cytoplasmic segment spans residues 188–195 (KVSLAQFA). Residues 196–216 (LAFVVDTCVAGALLCGAGLLF) form a helical membrane-spanning segment. Topologically, residues 217–284 (HGMLLLRGQT…TPTDVGLVTS (68 aa)) are extracellular.

It belongs to the DHHC palmitoyltransferase family.

The protein localises to the membrane. The enzyme catalyses L-cysteinyl-[protein] + hexadecanoyl-CoA = S-hexadecanoyl-L-cysteinyl-[protein] + CoA. Its function is as follows. Probable palmitoyltransferase that could catalyze the addition of palmitate onto various protein substrates. The sequence is that of Probable palmitoyltransferase ZDHHC24 (Zdhhc24) from Rattus norvegicus (Rat).